Consider the following 142-residue polypeptide: Large ribosomal subunit protein uL13 (142 aa).

Belongs to the universal ribosomal protein uL13 family. In terms of assembly, part of the 50S ribosomal subunit.

Functionally, this protein is one of the early assembly proteins of the 50S ribosomal subunit, although it is not seen to bind rRNA by itself. It is important during the early stages of 50S assembly. The polypeptide is Large ribosomal subunit protein uL13 (Laribacter hongkongensis (strain HLHK9)).